The sequence spans 208 residues: Probable acyl-homoserine-lactone synthase (208 aa).

The protein belongs to the autoinducer synthase family.

It carries out the reaction a fatty acyl-[ACP] + S-adenosyl-L-methionine = an N-acyl-L-homoserine lactone + S-methyl-5'-thioadenosine + holo-[ACP] + H(+). Required for the synthesis of OHHL (N-(3-oxooctanoyl)-L-homoserine lactone), an autoinducer molecule which binds to TraR and thus acts in the control of conjugal transfer. This chain is Probable acyl-homoserine-lactone synthase (traI), found in Sinorhizobium fredii (strain NBRC 101917 / NGR234).